A 797-amino-acid chain; its full sequence is N-acetylneuraminate (7)9-O-acetyltransferase (797 aa).

Residues 1 to 18 (MAALAYNLGKREINHYFS) lie on the Cytoplasmic side of the membrane. The helical transmembrane segment at 19-39 (VRSAKVLALVAVLLLAACHLA) threads the bilayer. At 40–313 (SRRYRGNDSC…QPRPPLTLIQ (274 aa)) the chain is on the lumenal side. The N-linked (GlcNAc...) asparagine glycan is linked to N46. S94 functions as the Acyl-ester intermediate in the catalytic mechanism. N-linked (GlcNAc...) asparagine glycosylation is found at N175 and N187. Active-site residues include D270 and H273. The chain crosses the membrane as a helical span at residues 314–334 (KLAACFFTLSIIGYFIFYVIH). Residues 335-363 (RNAHRKNKPCTDLESGEEKKNIINTPVSS) are Cytoplasmic-facing. Residues 364 to 384 (LEILLQSFCKLGLIMAYFYMC) form a helical membrane-spanning segment. The Lumenal portion of the chain corresponds to 385–395 (DRANLFMKENK). A helical transmembrane segment spans residues 396–416 (FYTHSSFFIPIIYILVLGVFY). Over 417–439 (NENTKETKVLNREQTDEWKGWMQ) the chain is Cytoplasmic. Residues 440–460 (LVILIYHISGASTFLPVYMHI) form a helical membrane-spanning segment. Position 461 (R461) is a topological domain, lumenal. The helical transmembrane segment at 462–482 (VLVAAYLFQTGYGHFSYFWIK) threads the bilayer. Residues 483–486 (GDFG) lie on the Cytoplasmic side of the membrane. Residues 487-507 (IHRVCQVLFRLNFLVVVLCIV) traverse the membrane as a helical segment. Topologically, residues 508-513 (MDRPYQ) are lumenal. The helical transmembrane segment at 514-534 (FYYFVPLVTVWFMVIYVTLAL) threads the bilayer. Residues 535–546 (WPQITQKKANGN) are Cytoplasmic-facing. A helical transmembrane segment spans residues 547–567 (FFWYLGLLLKLGLLLLCIWFL). The Lumenal segment spans residues 568-599 (AYSQGAFEKIFSLWPLSKCFELEGSVYEWWFR). Residues 600–620 (WRLDRYVVFHGVLFAFIYLAL) form a helical membrane-spanning segment. Over 621–638 (QRRQILSEGKGEPLFSNK) the chain is Cytoplasmic. Residues 639-659 (ISNFLLFVSVVSFLTYSIWAS) form a helical membrane-spanning segment. The Lumenal segment spans residues 660 to 671 (SCKNKAECNELH). A helical membrane pass occupies residues 672 to 692 (PSVSVVQIVAFILIRNIPGYA). Residues 693–698 (RSIYSS) are Cytoplasmic-facing. The helical transmembrane segment at 699-719 (FFAWFGKISLELFICQYHIWL) threads the bilayer. The Lumenal portion of the chain corresponds to 720–725 (AADTRG). The chain crosses the membrane as a helical span at residues 726-746 (ILVLIPGNPTLNIIVSTFIFV). The Cytoplasmic portion of the chain corresponds to 747-770 (CVAHEISQITTDLAQVVIPKDNPS). Residues 771-791 (LFRRLACTIAFFGGVLILSSI) form a helical membrane-spanning segment. Residues 792–797 (QDKSRL) lie on the Lumenal side of the membrane.

It belongs to the PC-esterase family. CASD1 subfamily. In terms of processing, N-glycosylated. Ubiquitously expressed.

The protein localises to the golgi apparatus membrane. It carries out the reaction CMP-N-acetyl-beta-neuraminate + acetyl-CoA = CMP-N-acetyl-9-O-acetyl-beta-neuraminate + CoA. The catalysed reaction is a ganglioside GD3 (d18:1(4E)) + acetyl-CoA = a ganglioside Ac-O-7-GD3(d18:1(4E)) + CoA. The enzyme catalyses CMP-N-acetyl-beta-neuraminate + acetyl-CoA = CMP-N-acetyl-7-O-acetyl-beta-neuraminate + CoA. Its function is as follows. Key enzyme in the biosynthesis of O-acetylated (O-Ac) sialoglycans such as gangliosides O-AcGD3 and O-AcGD2, which affect various processes such as cell-cell interactions, host-pathogen recognition. Catalyzes the transfer of an acetyl group from a donor, the acetyl-coenzyme-A molecule (acetyl-CoA), to the C7/8/9 OH-position of a sialic acid residue. The primary site of O-acetyl group transfer on sialic acid seems to depend on cell type and can be C7, from which the O-acetyl group could subsequently migrate to the C8 and then to the C9 position, or at C9 with possibility of migrating to the C8 and then to the C7 position. Together with ST8SIA1 (GD3 synthase) it increases the levels of ganglioside Ac-O-7-GD3. Can transfer the acetyl group from acetyl-CoA to free sialate (N-acetylneuraminate, Neu5Ac) in vitro, but has preferred substrate specificity for CMP-activated sialate (CMP-Neu5Ac), resulting in the formation of 9-O-acetylated CMP-Neu5Ac (CMP-Neu5,9Ac2). CMP-Neu5,9Ac2 may be used by sialyltransferases as a sialate donor for glycoconjugate acceptors such as ganglioside GD3. O-acetylation at position C9 of ganglioside GD3 can counteract the pro-apoptotic effects of the ganglioside GD3 in tumor cells. The sequence is that of N-acetylneuraminate (7)9-O-acetyltransferase from Mus musculus (Mouse).